Reading from the N-terminus, the 204-residue chain is Protein GrpE (204 aa).

The segment at 1–42 (MTDETAKNGPDAAADAQIEPQVQEETNSTAEDAGQDNNPTAA) is disordered. Over residues 23-41 (QEETNSTAEDAGQDNNPTA) the composition is skewed to polar residues.

It belongs to the GrpE family. Homodimer.

It localises to the cytoplasm. Participates actively in the response to hyperosmotic and heat shock by preventing the aggregation of stress-denatured proteins, in association with DnaK and GrpE. It is the nucleotide exchange factor for DnaK and may function as a thermosensor. Unfolded proteins bind initially to DnaJ; upon interaction with the DnaJ-bound protein, DnaK hydrolyzes its bound ATP, resulting in the formation of a stable complex. GrpE releases ADP from DnaK; ATP binding to DnaK triggers the release of the substrate protein, thus completing the reaction cycle. Several rounds of ATP-dependent interactions between DnaJ, DnaK and GrpE are required for fully efficient folding. This chain is Protein GrpE, found in Allorhizobium ampelinum (strain ATCC BAA-846 / DSM 112012 / S4) (Agrobacterium vitis (strain S4)).